Here is a 158-residue protein sequence, read N- to C-terminus: SsrA-binding protein (158 aa).

The tract at residues 131 to 158 (GKKTHDKRETEKKRDWNREKARLLRDRG) is disordered. Basic and acidic residues predominate over residues 136-158 (DKRETEKKRDWNREKARLLRDRG).

This sequence belongs to the SmpB family.

The protein localises to the cytoplasm. Its function is as follows. Required for rescue of stalled ribosomes mediated by trans-translation. Binds to transfer-messenger RNA (tmRNA), required for stable association of tmRNA with ribosomes. tmRNA and SmpB together mimic tRNA shape, replacing the anticodon stem-loop with SmpB. tmRNA is encoded by the ssrA gene; the 2 termini fold to resemble tRNA(Ala) and it encodes a 'tag peptide', a short internal open reading frame. During trans-translation Ala-aminoacylated tmRNA acts like a tRNA, entering the A-site of stalled ribosomes, displacing the stalled mRNA. The ribosome then switches to translate the ORF on the tmRNA; the nascent peptide is terminated with the 'tag peptide' encoded by the tmRNA and targeted for degradation. The ribosome is freed to recommence translation, which seems to be the essential function of trans-translation. The polypeptide is SsrA-binding protein (Brucella ovis (strain ATCC 25840 / 63/290 / NCTC 10512)).